The primary structure comprises 477 residues: Glycogen synthase (477 aa).

Position 15 (K15) interacts with ADP-alpha-D-glucose.

This sequence belongs to the glycosyltransferase 1 family. Bacterial/plant glycogen synthase subfamily.

The catalysed reaction is [(1-&gt;4)-alpha-D-glucosyl](n) + ADP-alpha-D-glucose = [(1-&gt;4)-alpha-D-glucosyl](n+1) + ADP + H(+). It participates in glycan biosynthesis; glycogen biosynthesis. Functionally, synthesizes alpha-1,4-glucan chains using ADP-glucose. The sequence is that of Glycogen synthase from Mannheimia succiniciproducens (strain KCTC 0769BP / MBEL55E).